Reading from the N-terminus, the 605-residue chain is Putative zinc finger CCCH domain-containing protein 57 (605 aa).

Disordered stretches follow at residues 198-218 (RHTG…GREV), 238-261 (LLQD…DGEV), and 375-403 (QASH…YQQP). 2 stretches are compositionally biased toward basic and acidic residues: residues 201–218 (GHES…GREV) and 238–250 (LLQD…RADA). A compositionally biased stretch (low complexity) spans 389-403 (FPFQQQPQHDGYQQP). C3H1-type zinc fingers lie at residues 519 to 547 (EPKT…HSQD) and 557 to 585 (KYRT…QHRL).

The sequence is that of Putative zinc finger CCCH domain-containing protein 57 from Oryza sativa subsp. japonica (Rice).